A 247-amino-acid polypeptide reads, in one-letter code: UPF0309 protein GWCH70_1414 (247 aa).

Residues V31–P214 enclose the SIS domain.

This sequence belongs to the UPF0309 family.

In Geobacillus sp. (strain WCH70), this protein is UPF0309 protein GWCH70_1414.